A 120-amino-acid chain; its full sequence is NAD(P)H-quinone oxidoreductase subunit 3, chloroplastic (120 aa).

3 helical membrane-spanning segments follow: residues 9 to 29 (IFWAFLIISSAIPILAFLISG), 64 to 84 (MFALVFVVFDVETVFLYPWAM), and 88 to 108 (VLGVPVFIEAFIFVLILIVGS).

The protein belongs to the complex I subunit 3 family. NDH is composed of at least 16 different subunits, 5 of which are encoded in the nucleus.

It localises to the plastid. It is found in the chloroplast thylakoid membrane. The enzyme catalyses a plastoquinone + NADH + (n+1) H(+)(in) = a plastoquinol + NAD(+) + n H(+)(out). It catalyses the reaction a plastoquinone + NADPH + (n+1) H(+)(in) = a plastoquinol + NADP(+) + n H(+)(out). NDH shuttles electrons from NAD(P)H:plastoquinone, via FMN and iron-sulfur (Fe-S) centers, to quinones in the photosynthetic chain and possibly in a chloroplast respiratory chain. The immediate electron acceptor for the enzyme in this species is believed to be plastoquinone. Couples the redox reaction to proton translocation, and thus conserves the redox energy in a proton gradient. In Gossypium hirsutum (Upland cotton), this protein is NAD(P)H-quinone oxidoreductase subunit 3, chloroplastic.